The following is a 137-amino-acid chain: Large ribosomal subunit protein uL16 (137 aa).

Belongs to the universal ribosomal protein uL16 family. Part of the 50S ribosomal subunit.

In terms of biological role, binds 23S rRNA and is also seen to make contacts with the A and possibly P site tRNAs. In Cellvibrio japonicus (strain Ueda107) (Pseudomonas fluorescens subsp. cellulosa), this protein is Large ribosomal subunit protein uL16.